A 156-amino-acid chain; its full sequence is S-ribosylhomocysteine lyase (156 aa).

Fe cation is bound by residues H54, H58, and C123.

It belongs to the LuxS family. As to quaternary structure, homodimer. Requires Fe cation as cofactor.

The enzyme catalyses S-(5-deoxy-D-ribos-5-yl)-L-homocysteine = (S)-4,5-dihydroxypentane-2,3-dione + L-homocysteine. In terms of biological role, involved in the synthesis of autoinducer 2 (AI-2) which is secreted by bacteria and is used to communicate both the cell density and the metabolic potential of the environment. The regulation of gene expression in response to changes in cell density is called quorum sensing. Catalyzes the transformation of S-ribosylhomocysteine (RHC) to homocysteine (HC) and 4,5-dihydroxy-2,3-pentadione (DPD). In Ligilactobacillus salivarius (strain UCC118) (Lactobacillus salivarius), this protein is S-ribosylhomocysteine lyase.